Reading from the N-terminus, the 908-residue chain is SH3 and PX domain-containing protein 2B (908 aa).

In terms of domain architecture, PX spans 5–129; it reads RSIVEVKVLD…QFFETRPEDL (125 aa). Position 25 is a phosphotyrosine (tyrosine 25). SH3 domains follow at residues 152 to 211 and 221 to 280; these read MVLE…GQDG and EEEE…KNSG. 2 positions are modified to phosphoserine: serine 279 and serine 291. Disordered regions lie at residues 280–300 and 315–366; these read GEPL…ALDL and ELLN…PPIP. Residues 315–337 are compositionally biased toward basic and acidic residues; sequence ELLNNQRDGRFEGRLVPDGDVKQ. The segment covering 338 to 347 has biased composition (basic residues); that stretch reads RSPKMRQRPP. The SH3 3 domain occupies 368–427; that stretch reads QVEEEYYTIAEFQTTIPDGISFQAGLKVEVIEKSLSGWWYIQMEDKEGWAPATFIDKYKK. Residues 455–832 are disordered; sequence TENNTGPEAV…LGPRVTGKVG (378 aa). Composition is skewed to basic and acidic residues over residues 486 to 499, 516 to 546, 569 to 584, 595 to 606, and 615 to 625; these read KDWK…RKAS, QEEK…KMEP, LARD…DKSK, CGHKVLAKEVKK, and SKAELSEEKVD. 2 positions are modified to phosphoserine: serine 499 and serine 528. Tyrosine 661 is modified (phosphotyrosine). Positions 671–684 are enriched in basic and acidic residues; sequence KSQEKALLDGESHH. The span at 754–764 shows a compositional bias: pro residues; it reads VVPPRRPPPPK. Position 840 is a phosphoserine (serine 840). The SH3 4 domain maps to 847 to 908; that stretch reads PKDSLYVAVA…IPSNYLRKKP (62 aa).

It belongs to the SH3PXD2 family. In terms of assembly, interacts with NOXO1. Interacts (via SH3 domains) with NOXA1; the interaction is direct. Interacts with ADAM15. Interacts with FASLG. In terms of processing, phosphorylated in SRC-transformed cells. Highly expressed in the stromal-vascular fraction of white adipose tissue with moderate expression in heart, skeletal muscle and the mature adipocyte fraction of white adipose tissue. Also expressed in brain, spleen, kidney and liver. Expressed in white and brown adipose tissues, eye, lung, heart, brain, spleen, stomach, liver and skeletal muscle (at protein level). Not expressed in kidney or bone marrow.

The protein localises to the cytoplasm. It localises to the cell projection. It is found in the podosome. Adapter protein involved in invadopodia and podosome formation and extracellular matrix degradation. Binds matrix metalloproteinases (ADAMs), NADPH oxidases (NOXs) and phosphoinositides. Acts as an organizer protein that allows NOX1- or NOX3-dependent reactive oxygen species (ROS) generation and ROS localization. Plays a role in mitotic clonal expansion during the immediate early stage of adipocyte differentiation. In Mus musculus (Mouse), this protein is SH3 and PX domain-containing protein 2B (Sh3pxd2b).